The chain runs to 736 residues: Copper-exporting P-type ATPase (736 aa).

The segment covering 1-17 has biased composition (basic residues); the sequence is MKHDHHQGHTHSGKGHA. The interval 1 to 32 is disordered; sequence MKHDHHQGHTHSGKGHACHHEHNSPKTQQASS. A run of 6 helical transmembrane segments spans residues 85–105, 114–134, 149–169, 183–203, 341–361, and 369–389; these read FWIA…GHGL, SSWI…WPFF, FTLI…AVLW, VVAV…LGQV, GWFV…WALL, and YGLI…LGLA. The active-site 4-aspartylphosphate intermediate is the D426. Residues D426, T428, and D624 each contribute to the Mg(2+) site. Helical transmembrane passes span 682–702 and 706–726; these read LFFA…VLYP and LLLS…SVII.

The protein belongs to the cation transport ATPase (P-type) (TC 3.A.3) family. Type IB subfamily. Requires Mg(2+) as cofactor.

Its subcellular location is the cell inner membrane. The catalysed reaction is Cu(+)(in) + ATP + H2O = Cu(+)(out) + ADP + phosphate + H(+). With respect to regulation, activated by phospholipids, Mg(2+) and Cu(+). Functionally, couples the hydrolysis of ATP with the export of copper. The chain is Copper-exporting P-type ATPase from Legionella pneumophila subsp. pneumophila (strain Philadelphia 1 / ATCC 33152 / DSM 7513).